The primary structure comprises 229 residues: Heptaprenylglyceryl phosphate synthase (229 aa).

A sn-glycerol 1-phosphate-binding site is contributed by lysine 12. The Mg(2+) site is built by aspartate 14 and threonine 40. Sn-glycerol 1-phosphate is bound by residues 159–164 (YIEYSG), glycine 189, and 209–210 (GN).

It belongs to the GGGP/HepGP synthase family. Group I subfamily. In terms of assembly, homodimer. Requires Mg(2+) as cofactor.

The catalysed reaction is sn-glycerol 1-phosphate + all-trans-heptaprenyl diphosphate = 3-heptaprenyl-sn-glycero-1-phosphate + diphosphate. Its pathway is membrane lipid metabolism; glycerophospholipid metabolism. Functionally, prenyltransferase that catalyzes in vivo the transfer of the heptaprenyl moiety of heptaprenyl pyrophosphate (HepPP; 35 carbon atoms) to the C3 hydroxyl of sn-glycerol-1-phosphate (G1P), producing heptaprenylglyceryl phosphate (HepGP). This reaction is an ether-bond-formation step in the biosynthesis of archaea-type G1P-based membrane lipids found in Bacillales. This chain is Heptaprenylglyceryl phosphate synthase, found in Staphylococcus carnosus (strain TM300).